The chain runs to 130 residues: Small ribosomal subunit protein uS12c (130 aa).

This sequence belongs to the universal ribosomal protein uS12 family. As to quaternary structure, part of the 30S ribosomal subunit.

The protein resides in the plastid. It is found in the chloroplast. Its function is as follows. With S4 and S5 plays an important role in translational accuracy. Located at the interface of the 30S and 50S subunits. In Tetradesmus obliquus (Green alga), this protein is Small ribosomal subunit protein uS12c (rps12).